Here is a 445-residue protein sequence, read N- to C-terminus: Phosphoglucosamine mutase (445 aa).

Serine 102 serves as the catalytic Phosphoserine intermediate. The Mg(2+) site is built by serine 102, aspartate 241, aspartate 243, and aspartate 245. Serine 102 is subject to Phosphoserine.

The protein belongs to the phosphohexose mutase family. Mg(2+) serves as cofactor. Activated by phosphorylation.

It carries out the reaction alpha-D-glucosamine 1-phosphate = D-glucosamine 6-phosphate. In terms of biological role, catalyzes the conversion of glucosamine-6-phosphate to glucosamine-1-phosphate. This chain is Phosphoglucosamine mutase, found in Salmonella paratyphi A (strain ATCC 9150 / SARB42).